Consider the following 694-residue polypeptide: MTFETIFVTLEEGKTLVFETGKIARQANGAVLARMQETWVFSSVCAANLEEPVDFLPLRVDYQEKFSSIGKTLGGFIKREGRPTEREILTSRLIDRSMRPSLPNRLMQDVQVLSYVWSYDGVTLPDPIAICGVSAALAISDIPQISVVAGVRVGFVNNSWVVNPTKAEMDVSRMELVLAGTENAILMIEGHCDFLTEEQVIEAIEFGHKHIATICRAIKDLQQKVGKKKNSDAIVPLPEEVQSSVNTFVEGKFADLLKIKEKKAFEAASKQLEKEIVEKFLEENEIFTALNIKTAFKQAKSDYMRALIREQSVRSDGRAITTIRPISIDTSFLPRTHGSCLFTRGETQTVAVCTLGSEAMAQRYEDLNGEGLAKFYLQYFFPPFSVGEVGRIGSPGRREIGHGKLAEKALSHTLPDPAKFPYTIRIESNITESNGSSSMASVCGGCLALMDAGVPIKTPIAGIAMGLILDNDHVTILSDISGLEDYLGDMDFKVAGNTEGITAFQMDIKVEGITPTIMQAALAQAKAGRQHILDIMKEALAAPKTDLSQYAPRIETMQIKPNKIATVIGPGGKQIRQIIEEAGVQIDINDSGLVSISASSPQAIEKAKSMIEGLVGEVEVGKIYEGRVTSIVPFGAFVEILPGKEGLCHISEFSKQRIENVGDFVKQGDILAVKLLSINEKGQYKLSHKATLSE.

Residues Asp485 and Asp491 each coordinate Mg(2+). In terms of domain architecture, KH spans 552-611; sequence PRIETMQIKPNKIATVIGPGGKQIRQIIEEAGVQIDINDSGLVSISASSPQAIEKAKSMI. The region spanning 621–689 is the S1 motif domain; it reads GKIYEGRVTS…EKGQYKLSHK (69 aa).

Belongs to the polyribonucleotide nucleotidyltransferase family. Requires Mg(2+) as cofactor.

The protein localises to the cytoplasm. The enzyme catalyses RNA(n+1) + phosphate = RNA(n) + a ribonucleoside 5'-diphosphate. Its function is as follows. Involved in mRNA degradation. Catalyzes the phosphorolysis of single-stranded polyribonucleotides processively in the 3'- to 5'-direction. The protein is Polyribonucleotide nucleotidyltransferase of Chlamydia caviae (strain ATCC VR-813 / DSM 19441 / 03DC25 / GPIC) (Chlamydophila caviae).